The chain runs to 513 residues: Cytochrome P450 77A3 (513 aa).

Cys451 is a binding site for heme.

The protein belongs to the cytochrome P450 family. It depends on heme as a cofactor.

The protein is Cytochrome P450 77A3 (CYP77A3) of Glycine max (Soybean).